The chain runs to 265 residues: 4-hydroxy-tetrahydrodipicolinate reductase (265 aa).

Residues 7–12 and Asp-33 each bind NAD(+); that span reads GASGRM. Residue Arg-34 participates in NADP(+) binding. NAD(+) is bound by residues 96–98 and 120–123; these read GTT and ASNF. His-153 functions as the Proton donor/acceptor in the catalytic mechanism. (S)-2,3,4,5-tetrahydrodipicolinate is bound at residue His-154. Residue Lys-157 is the Proton donor of the active site. Residue 163–164 coordinates (S)-2,3,4,5-tetrahydrodipicolinate; that stretch reads GT.

Belongs to the DapB family.

The protein localises to the cytoplasm. The catalysed reaction is (S)-2,3,4,5-tetrahydrodipicolinate + NAD(+) + H2O = (2S,4S)-4-hydroxy-2,3,4,5-tetrahydrodipicolinate + NADH + H(+). It catalyses the reaction (S)-2,3,4,5-tetrahydrodipicolinate + NADP(+) + H2O = (2S,4S)-4-hydroxy-2,3,4,5-tetrahydrodipicolinate + NADPH + H(+). It functions in the pathway amino-acid biosynthesis; L-lysine biosynthesis via DAP pathway; (S)-tetrahydrodipicolinate from L-aspartate: step 4/4. Catalyzes the conversion of 4-hydroxy-tetrahydrodipicolinate (HTPA) to tetrahydrodipicolinate. This Paraburkholderia phymatum (strain DSM 17167 / CIP 108236 / LMG 21445 / STM815) (Burkholderia phymatum) protein is 4-hydroxy-tetrahydrodipicolinate reductase.